Reading from the N-terminus, the 37-residue chain is Large ribosomal subunit protein bL36 (37 aa).

Belongs to the bacterial ribosomal protein bL36 family.

The chain is Large ribosomal subunit protein bL36 from Shewanella frigidimarina (strain NCIMB 400).